The sequence spans 285 residues: Non-structural protein 3c (285 aa).

This chain is Non-structural protein 3c, found in Bat coronavirus 133/2005 (BtCoV).